A 216-amino-acid chain; its full sequence is Probable GTP-binding protein EngB (216 aa).

The region spanning 37–214 (GSVEIAFAGR…RAAMIRLLDE (178 aa)) is the EngB-type G domain. Residues 45 to 52 (GRSNVGKS), 72 to 76 (GRTQE), 92 to 95 (DMPG), 159 to 162 (TKAD), and 193 to 195 (TSS) contribute to the GTP site. Positions 52 and 74 each coordinate Mg(2+).

Belongs to the TRAFAC class TrmE-Era-EngA-EngB-Septin-like GTPase superfamily. EngB GTPase family. It depends on Mg(2+) as a cofactor.

In terms of biological role, necessary for normal cell division and for the maintenance of normal septation. This chain is Probable GTP-binding protein EngB, found in Rhodopseudomonas palustris (strain TIE-1).